Reading from the N-terminus, the 169-residue chain is Disulfide bond formation protein B (169 aa).

Over 1–14 the chain is Cytoplasmic; sequence MNNLTLSLHRERRL. Residues 15-31 form a helical membrane-spanning segment; the sequence is LVLLGLVCLALLAGALY. At 32-49 the chain is on the periplasmic side; sequence LQYVKNEDPCPLCIIQRY. The cysteines at positions 41 and 44 are disulfide-linked. A helical transmembrane segment spans residues 50-64; sequence FFVLIAVFAFIGAGM. Over 65–71 the chain is Cytoplasmic; that stretch reads ASGAGIA. A helical transmembrane segment spans residues 72-89; sequence VIEALIVLSAAAGVGTAA. The Periplasmic portion of the chain corresponds to 90–144; it reads RHLYVQLNPGFSCGFDALQPVVDSLPPAHWLPGVFKVAGLCETVYPPIFGILLPG. The cysteines at positions 102 and 130 are disulfide-linked. Residues 145-163 traverse the membrane as a helical segment; it reads WALIAFALIVVPVAASLLR. Over 164–169 the chain is Cytoplasmic; the sequence is HRGRLR.

Belongs to the DsbB family.

It localises to the cell inner membrane. Required for disulfide bond formation in some periplasmic proteins. Acts by oxidizing the DsbA protein. The chain is Disulfide bond formation protein B from Burkholderia thailandensis (strain ATCC 700388 / DSM 13276 / CCUG 48851 / CIP 106301 / E264).